The sequence spans 718 residues: Fatty acid oxidation complex subunit alpha (718 aa).

Residues 1–188 are enoyl-CoA hydratase/isomerase; the sequence is MIYQGESIRV…KVGAVDAVVE (188 aa). Substrate is bound at residue Asp295. The interval 310 to 718 is 3-hydroxyacyl-CoA dehydrogenase; it reads TKEIKTAGVL…KSYFDTTSAK (409 aa). NAD(+) is bound by residues Met324, Asp343, 400–402, Lys407, and Ser429; that span reads VVE. His450 acts as the For 3-hydroxyacyl-CoA dehydrogenase activity in catalysis. An NAD(+)-binding site is contributed by Asn453. Substrate contacts are provided by Asn500 and Tyr658.

This sequence in the N-terminal section; belongs to the enoyl-CoA hydratase/isomerase family. It in the C-terminal section; belongs to the 3-hydroxyacyl-CoA dehydrogenase family. As to quaternary structure, heterotetramer of two alpha chains (FadB) and two beta chains (FadA).

It carries out the reaction a (3S)-3-hydroxyacyl-CoA + NAD(+) = a 3-oxoacyl-CoA + NADH + H(+). The enzyme catalyses a (3S)-3-hydroxyacyl-CoA = a (2E)-enoyl-CoA + H2O. The catalysed reaction is a 4-saturated-(3S)-3-hydroxyacyl-CoA = a (3E)-enoyl-CoA + H2O. It catalyses the reaction (3S)-3-hydroxybutanoyl-CoA = (3R)-3-hydroxybutanoyl-CoA. It carries out the reaction a (3Z)-enoyl-CoA = a 4-saturated (2E)-enoyl-CoA. The enzyme catalyses a (3E)-enoyl-CoA = a 4-saturated (2E)-enoyl-CoA. It functions in the pathway lipid metabolism; fatty acid beta-oxidation. Involved in the aerobic and anaerobic degradation of long-chain fatty acids via beta-oxidation cycle. Catalyzes the formation of 3-oxoacyl-CoA from enoyl-CoA via L-3-hydroxyacyl-CoA. It can also use D-3-hydroxyacyl-CoA and cis-3-enoyl-CoA as substrate. The chain is Fatty acid oxidation complex subunit alpha from Idiomarina loihiensis (strain ATCC BAA-735 / DSM 15497 / L2-TR).